The chain runs to 371 residues: S-adenosylmethionine:tRNA ribosyltransferase-isomerase (371 aa).

Belongs to the QueA family. In terms of assembly, monomer.

It localises to the cytoplasm. The catalysed reaction is 7-aminomethyl-7-carbaguanosine(34) in tRNA + S-adenosyl-L-methionine = epoxyqueuosine(34) in tRNA + adenine + L-methionine + 2 H(+). It participates in tRNA modification; tRNA-queuosine biosynthesis. Transfers and isomerizes the ribose moiety from AdoMet to the 7-aminomethyl group of 7-deazaguanine (preQ1-tRNA) to give epoxyqueuosine (oQ-tRNA). The chain is S-adenosylmethionine:tRNA ribosyltransferase-isomerase from Nitratidesulfovibrio vulgaris (strain ATCC 29579 / DSM 644 / CCUG 34227 / NCIMB 8303 / VKM B-1760 / Hildenborough) (Desulfovibrio vulgaris).